The chain runs to 241 residues: Triosephosphate isomerase (241 aa).

9 to 11 (NWK) is a binding site for substrate. His96 functions as the Electrophile in the catalytic mechanism. Residue Glu165 is the Proton acceptor of the active site. Substrate-binding positions include Gly171, Ser204, and 225–226 (GG).

It belongs to the triosephosphate isomerase family. In terms of assembly, homodimer.

Its subcellular location is the cytoplasm. It catalyses the reaction D-glyceraldehyde 3-phosphate = dihydroxyacetone phosphate. It functions in the pathway carbohydrate biosynthesis; gluconeogenesis. Its pathway is carbohydrate degradation; glycolysis; D-glyceraldehyde 3-phosphate from glycerone phosphate: step 1/1. In terms of biological role, involved in the gluconeogenesis. Catalyzes stereospecifically the conversion of dihydroxyacetone phosphate (DHAP) to D-glyceraldehyde-3-phosphate (G3P). The polypeptide is Triosephosphate isomerase (Nostoc sp. (strain PCC 7120 / SAG 25.82 / UTEX 2576)).